The sequence spans 401 residues: tRNA(Met) cytidine acetate ligase (401 aa).

ATP is bound by residues 7 to 20 (IVEY…HLYH), Gly-102, Asn-164, and Arg-189.

It belongs to the TmcAL family.

It is found in the cytoplasm. It catalyses the reaction cytidine(34) in elongator tRNA(Met) + acetate + ATP = N(4)-acetylcytidine(34) in elongator tRNA(Met) + AMP + diphosphate. Functionally, catalyzes the formation of N(4)-acetylcytidine (ac(4)C) at the wobble position of elongator tRNA(Met), using acetate and ATP as substrates. First activates an acetate ion to form acetyladenylate (Ac-AMP) and then transfers the acetyl group to tRNA to form ac(4)C34. The protein is tRNA(Met) cytidine acetate ligase of Thermoanaerobacter pseudethanolicus (strain ATCC 33223 / 39E) (Clostridium thermohydrosulfuricum).